The primary structure comprises 246 residues: Bis(5'-nucleosyl)-tetraphosphatase PrpE [asymmetrical] (246 aa).

This sequence belongs to the PrpE family. The cofactor is Ni(2+).

The enzyme catalyses P(1),P(4)-bis(5'-guanosyl) tetraphosphate + H2O = GMP + GTP + 2 H(+). Asymmetrically hydrolyzes Ap4p to yield AMP and ATP. This Halalkalibacterium halodurans (strain ATCC BAA-125 / DSM 18197 / FERM 7344 / JCM 9153 / C-125) (Bacillus halodurans) protein is Bis(5'-nucleosyl)-tetraphosphatase PrpE [asymmetrical].